Reading from the N-terminus, the 322-residue chain is NAD(P)H-dependent D-xylose reductase (322 aa).

The Proton donor role is filled by tyrosine 52. Residue histidine 114 participates in substrate binding. NAD(+) is bound by residues 169–170 (SN), 218–227 (SSFGPQSFVE), and 274–284 (KSNLPERLVQN).

The protein belongs to the aldo/keto reductase family. As to quaternary structure, homodimer.

It catalyses the reaction xylitol + NAD(+) = D-xylose + NADH + H(+). The catalysed reaction is xylitol + NADP(+) = D-xylose + NADPH + H(+). It functions in the pathway carbohydrate metabolism; D-xylose degradation. Functionally, reduces D-xylose into xylitol. Has a preference for NADPH, but can also utilize NADH as cosubstrate. The polypeptide is NAD(P)H-dependent D-xylose reductase (XYL1) (Candida tenuis (Yeast)).